The chain runs to 309 residues: Olfactory receptor 8A1 (309 aa).

Residues 1–28 are Extracellular-facing; the sequence is MTAENQSTVTEFILGGLTNRPELQLPLF. A helical membrane pass occupies residues 29–49; that stretch reads LLFLGIYVVTMVGNLGMITLI. The Cytoplasmic segment spans residues 50 to 56; it reads GLNSQLH. Residues 57–77 form a helical membrane-spanning segment; it reads TPMYFFLSNLSLVDLCYSSVI. Residues 78–90 lie on the Extracellular side of the membrane; it reads TPKMLINFVSQRN. A helical transmembrane segment spans residues 91-111; sequence LISYVGCMSQLYFFLVFVIAE. C97 and C188 are joined by a disulfide. At 112–133 the chain is on the cytoplasmic side; the sequence is CYMLTVMAYDRYVAICQPLLYN. Residues 134-154 traverse the membrane as a helical segment; sequence IIMSPALCSLLVAFVYAVGLI. The Extracellular portion of the chain corresponds to 155–195; it reads GSAIETGLMLKLNYCEDLISHYFCDILPLMKLSCSSTYDVE. The chain crosses the membrane as a helical span at residues 196–216; that stretch reads MAVFFLAGFDIIVTSLTVLIS. Topologically, residues 217 to 238 are cytoplasmic; sequence YAFILSSILRISSNEGRSKAFS. The chain crosses the membrane as a helical span at residues 239–259; the sequence is TCSSHFAAVGLFYGSTAFMYL. The Extracellular portion of the chain corresponds to 260–270; that stretch reads KPSTASSLAQE. The chain crosses the membrane as a helical span at residues 271–291; sequence NVASVFYTTVIPMFNPLIYSL. Residues 292–309 are Cytoplasmic-facing; that stretch reads RNKEVKTALDKTLRRKVF.

It belongs to the G-protein coupled receptor 1 family.

Its subcellular location is the cell membrane. Odorant receptor. This Mus musculus (Mouse) protein is Olfactory receptor 8A1.